The following is a 118-amino-acid chain: Ribonuclease P protein component (118 aa).

Belongs to the RnpA family. Consists of a catalytic RNA component (M1 or rnpB) and a protein subunit.

The catalysed reaction is Endonucleolytic cleavage of RNA, removing 5'-extranucleotides from tRNA precursor.. RNaseP catalyzes the removal of the 5'-leader sequence from pre-tRNA to produce the mature 5'-terminus. It can also cleave other RNA substrates such as 4.5S RNA. The protein component plays an auxiliary but essential role in vivo by binding to the 5'-leader sequence and broadening the substrate specificity of the ribozyme. The chain is Ribonuclease P protein component from Rickettsia canadensis (strain McKiel).